We begin with the raw amino-acid sequence, 253 residues long: Triosephosphate isomerase (253 aa).

Residue 9–11 (NWK) participates in substrate binding. His-95 acts as the Electrophile in catalysis. The Proton acceptor role is filled by Glu-167. Substrate-binding positions include Gly-173, Ser-213, and 234-235 (GG). The residue at position 213 (Ser-213) is a Phosphoserine.

It belongs to the triosephosphate isomerase family. As to quaternary structure, homodimer.

It localises to the cytoplasm. The catalysed reaction is D-glyceraldehyde 3-phosphate = dihydroxyacetone phosphate. Its pathway is carbohydrate biosynthesis; gluconeogenesis. It participates in carbohydrate degradation; glycolysis; D-glyceraldehyde 3-phosphate from glycerone phosphate: step 1/1. In terms of biological role, involved in the gluconeogenesis. Catalyzes stereospecifically the conversion of dihydroxyacetone phosphate (DHAP) to D-glyceraldehyde-3-phosphate (G3P). The sequence is that of Triosephosphate isomerase from Bacillus subtilis (strain 168).